The following is a 485-amino-acid chain: MSYPQFGYPYSSAPQFLMSTNSLTPCCESGGRTLPESGPAAPAQTPVYCPVYESRLLATARHELNSAAALGVYGGPYGGPQGYGNYVTYGTEAPAFYSLNTLEAKDGGGSAHAGISPAAAYYPYEHSLSQYQYDRYGAMDGGTRRKNATRETTSTLKAWLQEHRKNPYPTKGEKIMLAIITKMTLTQVSTWFANARRRLKKENKMTWPPRNKCSDEKRPYEEEEEEEEECSQEDAMKSEKAEEPTGKEEKELELSDLEDLDAAESESSECEMRRPFPHPHPHPLPGGGPPPRAAEPPAAAAEEEEEEAAERARGCLKPAAEECEAALLGARPRGCEAKLCFPQGQPLLEAKPRIWSLAHTATSLNQAEYPSCMLKRSGGSAAAAVSAPVSVMDRHQDSPVTNLRNWVDGVFHDPLFRHSTLNQALSNTTVSWATTKGAILETGALGRSVGNGANVLKGQLANLAHQDSSKEFLAFPKAGSKMFCS.

Residues 142–203 (GTRRKNATRE…NARRRLKKEN (62 aa)) constitute a DNA-binding region (homeobox; TALE-type). Positions 206-313 (TWPPRNKCSD…EEEEAAERAR (108 aa)) are disordered. The span at 221-232 (EEEEEEEEECSQ) shows a compositional bias: acidic residues. Basic and acidic residues predominate over residues 234–253 (DAMKSEKAEEPTGKEEKELE). Positions 254 to 269 (LSDLEDLDAAESESSE) are enriched in acidic residues. Pro residues predominate over residues 282 to 294 (HPLPGGGPPPRAA).

This sequence belongs to the TALE/IRO homeobox family. Ventricles of the heart, developing feather buds, retina, hindbrain.

It localises to the nucleus. Functionally, regulates the chamber-specific expression of myosin isoforms by activating the expression of the ventricle myosin heavy chain-1 (Vmhc1) and suppressing the expression of the atrial myosin heavy chain-1 (Amhc1) in the ventricles. May play a critical role in establishing chamber-specific gene expression in the developing heart. This Gallus gallus (Chicken) protein is Iroquois-class homeodomain protein IRX-4 (IRX4).